A 198-amino-acid chain; its full sequence is MAMDDYDDDMSSVGVTTARIENQHQQHPHQQGQHGHHQQGQGQSQYSAGAVKVGGWRYEDASRYIGEWNQRGQKHGIGHLQFADGTRYDGQFQEGLSQGVGCLWFADGAKYEGEFHQGWFHGNGIFWRADGMKYEGEFRGGKIWGLGLLTFQDFTHGFPRNEGFFQDCRFMRRRRCPEVVQRAQKCALMARSQCEHPY.

A2 is modified (N-acetylalanine). Positions 23 to 45 are enriched in low complexity; that stretch reads QHQQHPHQQGQHGHHQQGQGQSQ. Residues 23–46 are disordered; it reads QHQQHPHQQGQHGHHQQGQGQSQY. MORN repeat units follow at residues 64 to 87, 88 to 109, 111 to 132, and 134 to 153; these read YIGE…DGTR, YDGQ…ADGA, YEGE…ADGM, and YEGE…TFQD.

In terms of assembly, interacts with ninaC. In terms of processing, phosphorylated under dark conditions and is dephosphorylated by light exposure. Retina. Expressed primarily in the phototransducing compartment of photoreceptor cells, the rhabdomeres and its expression is dependent on ninaC protein (at protein level).

Its subcellular location is the membrane. It localises to the cell projection. The protein resides in the rhabdomere membrane. Functionally, plays a role in promoting axonal degeneration following neuronal injury by toxic insult or trauma. Organizes rhabdomeric components to suppress random activation of the phototransduction cascade and thus increases the signaling fidelity of dark-adapted photoreceptors. The rtp/ninaC complex is required for stability of inad and inac and the normal termination of phototransduction in the retina. The sequence is that of MORN repeat-containing protein 4 homolog from Drosophila melanogaster (Fruit fly).